Reading from the N-terminus, the 944-residue chain is 2-oxoglutarate dehydrogenase E1 component (944 aa).

The tract at residues 918-944 (SSTAEGDPTVHKKEQERIVSDSLTRKN) is disordered. The segment covering 925 to 936 (PTVHKKEQERIV) has biased composition (basic and acidic residues).

Belongs to the alpha-ketoglutarate dehydrogenase family. As to quaternary structure, homodimer. Part of the 2-oxoglutarate dehydrogenase (OGDH) complex composed of E1 (2-oxoglutarate dehydrogenase), E2 (dihydrolipoamide succinyltransferase) and E3 (dihydrolipoamide dehydrogenase); the complex contains multiple copies of the three enzymatic components (E1, E2 and E3). The cofactor is thiamine diphosphate.

The enzyme catalyses N(6)-[(R)-lipoyl]-L-lysyl-[protein] + 2-oxoglutarate + H(+) = N(6)-[(R)-S(8)-succinyldihydrolipoyl]-L-lysyl-[protein] + CO2. Functionally, E1 component of the 2-oxoglutarate dehydrogenase (OGDH) complex which catalyzes the decarboxylation of 2-oxoglutarate, the first step in the conversion of 2-oxoglutarate to succinyl-CoA and CO(2). This is 2-oxoglutarate dehydrogenase E1 component from Bacillus pumilus (strain SAFR-032).